The chain runs to 130 residues: Small ribosomal subunit protein uS8 (130 aa).

The protein belongs to the universal ribosomal protein uS8 family. As to quaternary structure, part of the 30S ribosomal subunit. Contacts proteins S5 and S12.

In terms of biological role, one of the primary rRNA binding proteins, it binds directly to 16S rRNA central domain where it helps coordinate assembly of the platform of the 30S subunit. The sequence is that of Small ribosomal subunit protein uS8 from Stutzerimonas stutzeri (strain A1501) (Pseudomonas stutzeri).